Consider the following 344-residue polypeptide: uncharacterized protein (344 aa).

2 residues coordinate NADP(+): Lys-38 and Tyr-167.

This sequence belongs to the NAD(P)-dependent epimerase/dehydratase family. Dihydroflavonol-4-reductase subfamily.

This is an uncharacterized protein from Saccharomyces cerevisiae (strain ATCC 204508 / S288c) (Baker's yeast).